We begin with the raw amino-acid sequence, 501 residues long: Eukaryotic translation initiation factor 3 subunit E (501 aa).

Residues 245–423 (CDLFFYTPYL…ESIESTSTNV (179 aa)) enclose the PCI domain. Phosphoserine is present on residues Ser477 and Ser479.

It belongs to the eIF-3 subunit E family. As to quaternary structure, component of the eukaryotic translation initiation factor 3 (eIF-3) complex. The eIF-3 complex appears to include tif32/eif3a, SPAC25G10.08/eif3b, tif33/eif3c, SPBC4C3.07/eif3f, tif35/eif3g and sum1/eif3i. This set of common subunits may also associate exclusively with either moe1/eif3d and int6/eif3e, or with SPAC821.05/eif3h and SPAC1751.03/eif3m. The eIF-3 complex may also include SPAC3A12.13c/eif3j. Also interacts with the proteasome via rpn501/rpn502.

Its subcellular location is the cytoplasm. Component of the eukaryotic translation initiation factor 3 (eIF-3) complex, which is involved in protein synthesis of a specialized repertoire of mRNAs and, together with other initiation factors, stimulates binding of mRNA and methionyl-tRNAi to the 40S ribosome. The eIF-3 complex specifically targets and initiates translation of a subset of mRNAs involved in cell proliferation (Potential). Required for maintaining the basal level of atf1 and for transcriptional activation of core environmental stress response genes (CESR genes) in response to histidine starvation. May positively regulate proteasome activity. Required for nuclear localization of the proteasome subunit rpn501/rpn502. This Schizosaccharomyces pombe (strain 972 / ATCC 24843) (Fission yeast) protein is Eukaryotic translation initiation factor 3 subunit E (int6).